The primary structure comprises 473 residues: Cysteine--tRNA ligase (473 aa).

Cys30 serves as a coordination point for Zn(2+). A 'HIGH' region motif is present at residues 32–42 (MTVYDYCHIGH). Residues Cys213, His238, and Glu242 each coordinate Zn(2+). The short motif at 270 to 274 (KMSKS) is the 'KMSKS' region element. Position 273 (Lys273) interacts with ATP.

Belongs to the class-I aminoacyl-tRNA synthetase family. In terms of assembly, monomer. Zn(2+) serves as cofactor.

The protein localises to the cytoplasm. The catalysed reaction is tRNA(Cys) + L-cysteine + ATP = L-cysteinyl-tRNA(Cys) + AMP + diphosphate. This is Cysteine--tRNA ligase from Acinetobacter baylyi (strain ATCC 33305 / BD413 / ADP1).